The primary structure comprises 518 residues: Protein nucleotidyltransferase YdiU (518 aa).

Residues 1–22 (MTHLQFDNRLRAELPGDPEEGP) are disordered. Positions 100, 102, 103, 123, 135, 136, 193, and 200 each coordinate ATP. The active-site Proton acceptor is Asp270. Mg(2+)-binding residues include Asn271 and Asp280. ATP is bound at residue Asp280.

Belongs to the SELO family. Mg(2+) serves as cofactor. It depends on Mn(2+) as a cofactor.

The catalysed reaction is L-seryl-[protein] + ATP = 3-O-(5'-adenylyl)-L-seryl-[protein] + diphosphate. The enzyme catalyses L-threonyl-[protein] + ATP = 3-O-(5'-adenylyl)-L-threonyl-[protein] + diphosphate. It carries out the reaction L-tyrosyl-[protein] + ATP = O-(5'-adenylyl)-L-tyrosyl-[protein] + diphosphate. It catalyses the reaction L-histidyl-[protein] + UTP = N(tele)-(5'-uridylyl)-L-histidyl-[protein] + diphosphate. The catalysed reaction is L-seryl-[protein] + UTP = O-(5'-uridylyl)-L-seryl-[protein] + diphosphate. The enzyme catalyses L-tyrosyl-[protein] + UTP = O-(5'-uridylyl)-L-tyrosyl-[protein] + diphosphate. Nucleotidyltransferase involved in the post-translational modification of proteins. It can catalyze the addition of adenosine monophosphate (AMP) or uridine monophosphate (UMP) to a protein, resulting in modifications known as AMPylation and UMPylation. This Xanthomonas campestris pv. campestris (strain 8004) protein is Protein nucleotidyltransferase YdiU.